The sequence spans 188 residues: Probable nicotinate-nucleotide adenylyltransferase (188 aa).

This sequence belongs to the NadD family.

It catalyses the reaction nicotinate beta-D-ribonucleotide + ATP + H(+) = deamido-NAD(+) + diphosphate. It participates in cofactor biosynthesis; NAD(+) biosynthesis; deamido-NAD(+) from nicotinate D-ribonucleotide: step 1/1. Catalyzes the reversible adenylation of nicotinate mononucleotide (NaMN) to nicotinic acid adenine dinucleotide (NaAD). This Acholeplasma laidlawii (strain PG-8A) protein is Probable nicotinate-nucleotide adenylyltransferase.